Here is a 280-residue protein sequence, read N- to C-terminus: Ribosomal protein L11 methyltransferase (280 aa).

S-adenosyl-L-methionine-binding residues include Thr-130, Gly-151, Asp-172, and Asn-213.

Belongs to the methyltransferase superfamily. PrmA family.

The protein resides in the cytoplasm. The catalysed reaction is L-lysyl-[protein] + 3 S-adenosyl-L-methionine = N(6),N(6),N(6)-trimethyl-L-lysyl-[protein] + 3 S-adenosyl-L-homocysteine + 3 H(+). Methylates ribosomal protein L11. The chain is Ribosomal protein L11 methyltransferase from Nitratiruptor sp. (strain SB155-2).